The following is a 131-amino-acid chain: Small ribosomal subunit protein uS8 (131 aa).

Belongs to the universal ribosomal protein uS8 family. As to quaternary structure, part of the 30S ribosomal subunit. Contacts proteins S5 and S12.

Functionally, one of the primary rRNA binding proteins, it binds directly to 16S rRNA central domain where it helps coordinate assembly of the platform of the 30S subunit. In Malacoplasma penetrans (strain HF-2) (Mycoplasma penetrans), this protein is Small ribosomal subunit protein uS8.